Consider the following 29-residue polypeptide: Kalata-B15 (29 aa).

Positions 1-29 (GLPVCGESCFGGSCYTPGCSCTWPICTRD) form a cross-link, cyclopeptide (Gly-Asp). 3 disulfide bridges follow: Cys5/Cys19, Cys9/Cys21, and Cys14/Cys26.

Post-translationally, this is a cyclic peptide.

In terms of biological role, probably participates in a plant defense mechanism. This chain is Kalata-B15, found in Oldenlandia affinis.